The chain runs to 103 residues: Cyclotide vibi-K (103 aa).

An N-terminal signal peptide occupies residues 1–9 (AAFALPAFA). A propeptide spanning residues 10 to 69 (SFEKDVITPSVLEAVLNRKAPLSNIMMENDAILNVIANVKTVISNPVLEEALLKTNHGVN) is cleaved from the precursor. Residues 70–99 (GIPCGESCVWIPCLTSAVGCPCKSKVCYRN) constitute a cross-link (cyclopeptide (Gly-Asn)). 3 cysteine pairs are disulfide-bonded: Cys73–Cys89, Cys77–Cys91, and Cys82–Cys96. The propeptide occupies 100–103 (SLDN).

In terms of processing, this is a cyclic peptide.

Functionally, probably participates in a plant defense mechanism. The chain is Cyclotide vibi-K from Viola biflora (Yellow wood violet).